A 273-amino-acid polypeptide reads, in one-letter code: MENCLPRSLEKLQQILQISLEDLPFGCIFCGKLLGAAEKQLFKCTGLCIVWHKGWPYGTCRDCTVLSCALDLYCHLALTAPALEAEALVGQEISSWFMRCTVCGRRLTIPEKIELRARNCTLCCIDKGQYFQWRGHCSSCKLSDQGDLGGYPPSPGSRCGECDECCVPDLTHLTPVDLEELGLYPGPEGTYPDLVDLGPGVFGEEDEEGGGLFDSFEEEDPGPNQCGCFFCTSYPSGTGDTDINQGPAGAAGIALQSDPVCFCENCINFTEFR.

Zinc fingers lie at residues 27 to 63 and 100 to 140; these read CIFCGKLLGAAEKQLFKCTGLCIVWHKGWPYGTCRDC and CTVC…CSSC.

The protein belongs to the papillomaviridae E6 protein family. As to quaternary structure, forms homodimers. Interacts with ubiquitin-protein ligase UBE3A/E6-AP; this interaction stimulates UBE3A ubiquitin activity. Interacts with host BAK1.

The protein localises to the host cytoplasm. The protein resides in the host nucleus. Functionally, plays a major role in the induction and maintenance of cellular transformation. E6 associates with host UBE3A/E6-AP ubiquitin-protein ligase and modulates its activity. Protects host keratinocytes from apoptosis by mediating the degradation of host BAK1. May also inhibit host immune response. In Sylvilagus floridanus (Cottontail rabbit), this protein is Protein E6.